Consider the following 337-residue polypeptide: Mitochondrial metalloendopeptidase OMA1 (337 aa).

Residues 1–68 (MFLNKYISNY…QPNPRDKRFQ (68 aa)) lie on the Mitochondrial matrix side of the membrane. Residues 69–89 (WIFGALIAGGGVYYFTHLEYV) form a helical membrane-spanning segment. Residues 90 to 337 (PISNRRRFND…MLQSFKEVHW (248 aa)) are Mitochondrial intermembrane-facing. Zn(2+) is bound at residue H195. Residue E196 is part of the active site. 2 residues coordinate Zn(2+): H199 and E250. C265 and C321 are joined by a disulfide.

This sequence belongs to the peptidase M48 family. It depends on Zn(2+) as a cofactor.

The protein resides in the mitochondrion inner membrane. Its activity is regulated as follows. Protease activity is induced in response to various mitochondrial stress. In terms of biological role, protease that is part of the quality control system in the inner membrane of mitochondria. Cleaves and thereby promotes the turnover of mistranslated or misfolded membrane protein. In Schizosaccharomyces pombe (strain 972 / ATCC 24843) (Fission yeast), this protein is Mitochondrial metalloendopeptidase OMA1.